The chain runs to 79 residues: Serine protease inhibitor Kazal-type 1-like (79 aa).

The first 23 residues, 1–23 (MKVAIIFLLSALALLNLAGNTTA), serve as a signal peptide directing secretion. The 54-residue stretch at 26 to 79 (IGKKANCPNTLVGCPRDYDPVCGTDGKTYANECILCFENRKFGTSIRIQRRGLC) folds into the Kazal-like domain. Cystine bridges form between Cys32–Cys61, Cys39–Cys58, and Cys47–Cys79.

In terms of tissue distribution, seminal vesicle.

The protein resides in the secreted. Functionally, serine protease inhibitor which exhibits anti-trypsin activity. In the pancreas, protects against trypsin-catalyzed premature activation of zymogens. In the male reproductive tract, binds to sperm heads where it modulates sperm capacitance by inhibiting calcium uptake and nitrogen oxide (NO) production. This chain is Serine protease inhibitor Kazal-type 1-like, found in Rattus norvegicus (Rat).